Consider the following 129-residue polypeptide: uncharacterized protein (129 aa).

Disordered regions lie at residues 1-57 (MGGG…LPNH) and 87-129 (PVSS…WLWW). Basic and acidic residues predominate over residues 10–20 (SGEERREKRSG). Low complexity predominate over residues 87-99 (PVSSSPSRSPSSS).

This is an uncharacterized protein from Homo sapiens (Human).